A 129-amino-acid polypeptide reads, in one-letter code: Protein LLP homolog (129 aa).

The segment covering 1 to 21 (MAKSLRSKWKRKMRAEKRKKN) has biased composition (basic residues). The interval 1–27 (MAKSLRSKWKRKMRAEKRKKNAPKEAS) is disordered. Residues lysine 67 and lysine 74 each participate in a glycyl lysine isopeptide (Lys-Gly) (interchain with G-Cter in SUMO2) cross-link. Residues 100 to 122 (RQRKRLKAKREKRKGKSKAKAVK) are compositionally biased toward basic residues. The tract at residues 100-129 (RQRKRLKAKREKRKGKSKAKAVKVAKGLAW) is disordered.

It belongs to the learning-associated protein family. In terms of assembly, interacts with CTCF, MYO1C and with the transcriptional machinery, including RNA polymerase II and TBP.

The protein localises to the nucleus. The protein resides in the nucleolus. It localises to the chromosome. Functionally, in hippocampal neurons, regulates dendritic and spine growth and synaptic transmission. The sequence is that of Protein LLP homolog (LLPH) from Homo sapiens (Human).